The following is a 266-amino-acid chain: Coiled-coil domain-containing glutamate-rich protein 2 (266 aa).

The first 23 residues, 1–23 (MPPRGPASELLLLRLLLLGAATA), serve as a signal peptide directing secretion. Basic and acidic residues-rich tracts occupy residues 90 to 100 (EAGKMRSSQEV), 154 to 188 (LWQR…EKGV), 204 to 213 (GGGERREDLP), and 221 to 266 (QPEA…RREG). A disordered region spans residues 90–266 (EAGKMRSSQE…TLGEQLRREG (177 aa)).

Expressed at higher levels in fetal brain and skeletal muscle. Lower expression is detected in fetal kidney, liver, spleen, thymus, heart and lung.

It localises to the secreted. This Homo sapiens (Human) protein is Coiled-coil domain-containing glutamate-rich protein 2 (CCER2).